The following is a 704-amino-acid chain: Methionine--tRNA ligase (704 aa).

The 'HIGH' region signature appears at 17 to 27 (PYANGPIHLGH). Positions 148, 151, 161, and 164 each coordinate Zn(2+). A 'KMSKS' region motif is present at residues 348-352 (KMSKS). ATP is bound at residue lysine 351. Residues 603–704 (ELSKVELRVG…KDAKPGDRLK (102 aa)) form the tRNA-binding domain.

This sequence belongs to the class-I aminoacyl-tRNA synthetase family. MetG type 1 subfamily. As to quaternary structure, homodimer. It depends on Zn(2+) as a cofactor.

The protein localises to the cytoplasm. It catalyses the reaction tRNA(Met) + L-methionine + ATP = L-methionyl-tRNA(Met) + AMP + diphosphate. Its function is as follows. Is required not only for elongation of protein synthesis but also for the initiation of all mRNA translation through initiator tRNA(fMet) aminoacylation. This Leptospira borgpetersenii serovar Hardjo-bovis (strain L550) protein is Methionine--tRNA ligase.